A 209-amino-acid chain; its full sequence is FAS-associated death domain protein (209 aa).

The DED domain maps to 3–81 (PFLVLLHSVS…RKDLLLRLDD (79 aa)). Positions 97 to 181 (LRAAMEIICD…VVADLIEEDQ (85 aa)) constitute a Death domain. The segment covering 187–200 (QSGSANPGSFTAWD) has biased composition (polar residues). The tract at residues 187–209 (QSGSANPGSFTAWDSGSAAPGAS) is disordered.

As to quaternary structure, can self-associate. Component of the AIM2 PANoptosome complex, a multiprotein complex that drives inflammatory cell death (PANoptosis). Component of the death-induced signaling complex (DISC) composed of cell surface receptor FAS/CD95 or TNFRSF1A, adapter protein FADD and the CASP8 protease; recruitment of CASP8 to the complex is required for processing of CASP8 into the p18 and p10 subunits. Interacts (via death domain) with FAS (via death domain). Interacts directly (via DED domain) with NOL3 (via CARD domain); inhibits death-inducing signaling complex (DISC) assembly by inhibiting the increase in FAS-FADD binding induced by FAS activation. Interacts with CFLAR, PEA15 and MBD4. When phosphorylated, part of a complex containing HIPK3 and FAS. May interact with MAVS/IPS1. Interacts with MOCV v-CFLAR protein and PIDD1. Interacts with RIPK1 and TRADD. Interacts with stimulated TNFRSF10B. Interacts with DDX24. Post-translationally, phosphorylated.

It localises to the cytoplasm. In terms of biological role, apoptotic adapter molecule that recruits caspases CASP8 or CASP10 to the activated FAS/CD95 or TNFRSF1A/TNFR-1 receptors. The resulting aggregate called the death-inducing signaling complex (DISC) performs CASP8 proteolytic activation. Active CASP8 initiates the subsequent cascade of caspases mediating apoptosis. Involved in interferon-mediated antiviral immune response, playing a role in the positive regulation of interferon signaling. This is FAS-associated death domain protein from Bos taurus (Bovine).